The following is a 338-amino-acid chain: tRNA N6-adenosine threonylcarbamoyltransferase (338 aa).

Positions 111 and 115 each coordinate Fe cation. Substrate is bound by residues 134-138, aspartate 167, glycine 180, and asparagine 272; that span reads LVSGG. Aspartate 300 contributes to the Fe cation binding site.

Belongs to the KAE1 / TsaD family. Fe(2+) is required as a cofactor.

It is found in the cytoplasm. It carries out the reaction L-threonylcarbamoyladenylate + adenosine(37) in tRNA = N(6)-L-threonylcarbamoyladenosine(37) in tRNA + AMP + H(+). Its function is as follows. Required for the formation of a threonylcarbamoyl group on adenosine at position 37 (t(6)A37) in tRNAs that read codons beginning with adenine. Is involved in the transfer of the threonylcarbamoyl moiety of threonylcarbamoyl-AMP (TC-AMP) to the N6 group of A37, together with TsaE and TsaB. TsaD likely plays a direct catalytic role in this reaction. The sequence is that of tRNA N6-adenosine threonylcarbamoyltransferase from Aliivibrio salmonicida (strain LFI1238) (Vibrio salmonicida (strain LFI1238)).